The sequence spans 391 residues: Immediate-early protein 2 (391 aa).

It belongs to the herpesviridae US22 family.

The protein resides in the host cytoplasm. The protein localises to the host nucleus. Functionally, involved in the reactivation of latent MCMV in spleen cells. The protein is Immediate-early protein 2 (IE2) of Murid herpesvirus 1 (strain Smith) (MuHV-1).